Reading from the N-terminus, the 89-residue chain is MKKGIHPENYREVLFYDGSVQMGWIIRSCAATTKTMVWEDGKEYPFYPLDTSSASHPVYTGKRREVNTEGRASKFNERFKGMAGLAAKK.

Belongs to the bacterial ribosomal protein bL31 family. Type B subfamily. In terms of assembly, part of the 50S ribosomal subunit.

This Actinobacillus pleuropneumoniae serotype 5b (strain L20) protein is Large ribosomal subunit protein bL31B.